Reading from the N-terminus, the 239-residue chain is 1-(5-phosphoribosyl)-5-[(5-phosphoribosylamino)methylideneamino] imidazole-4-carboxamide isomerase (239 aa).

Aspartate 8 serves as the catalytic Proton acceptor. Aspartate 129 (proton donor) is an active-site residue.

This sequence belongs to the HisA/HisF family.

The protein resides in the cytoplasm. The catalysed reaction is 1-(5-phospho-beta-D-ribosyl)-5-[(5-phospho-beta-D-ribosylamino)methylideneamino]imidazole-4-carboxamide = 5-[(5-phospho-1-deoxy-D-ribulos-1-ylimino)methylamino]-1-(5-phospho-beta-D-ribosyl)imidazole-4-carboxamide. The protein operates within amino-acid biosynthesis; L-histidine biosynthesis; L-histidine from 5-phospho-alpha-D-ribose 1-diphosphate: step 4/9. The protein is 1-(5-phosphoribosyl)-5-[(5-phosphoribosylamino)methylideneamino] imidazole-4-carboxamide isomerase of Pelagibacter ubique (strain HTCC1062).